The chain runs to 388 residues: Chorismate synthase (388 aa).

NADP(+)-binding residues include Arg39 and Arg45. FMN contacts are provided by residues 130–132, 251–252, Gly296, 311–315, and Arg337; these read RSS, NA, and KPIPT.

It belongs to the chorismate synthase family. As to quaternary structure, homotetramer. Requires FMNH2 as cofactor.

It carries out the reaction 5-O-(1-carboxyvinyl)-3-phosphoshikimate = chorismate + phosphate. Its pathway is metabolic intermediate biosynthesis; chorismate biosynthesis; chorismate from D-erythrose 4-phosphate and phosphoenolpyruvate: step 7/7. In terms of biological role, catalyzes the anti-1,4-elimination of the C-3 phosphate and the C-6 proR hydrogen from 5-enolpyruvylshikimate-3-phosphate (EPSP) to yield chorismate, which is the branch point compound that serves as the starting substrate for the three terminal pathways of aromatic amino acid biosynthesis. This reaction introduces a second double bond into the aromatic ring system. In Streptococcus pneumoniae (strain 70585), this protein is Chorismate synthase.